The chain runs to 2346 residues: Acetyl-CoA carboxylase 1 (2346 aa).

Methionine 1 is modified (N-acetylmethionine). A phosphoserine mark is found at serine 5, serine 23, serine 25, serine 29, serine 34, serine 48, serine 50, and serine 53. A Phosphothreonine modification is found at threonine 58. Phosphoserine is present on serine 78. The residue at position 80 (serine 80) is a Phosphoserine; by AMPK. One can recognise a Biotin carboxylation domain in the interval 117–618 (VIEKVLIANN…DTGWLDRLIA (502 aa)). The ATP-grasp domain maps to 275-466 (SKRILNVPQE…LPAAQLQIAM (192 aa)). Position 315 to 320 (315 to 320 (GGGGKG)) interacts with ATP. Glutamate 424, glutamate 437, and asparagine 439 together coordinate Mg(2+). Mn(2+) is bound by residues glutamate 424, glutamate 437, and asparagine 439. Residue arginine 441 is part of the active site. Position 610 is a phosphothreonine (threonine 610). Positions 745–819 (FEKENDPSVL…DPGCVIAKMQ (75 aa)) constitute a Biotinyl-binding domain. An N6-biotinyllysine modification is found at lysine 786. 4 positions are modified to phosphoserine: serine 835, serine 1201, serine 1216, and serine 1218. Residue threonine 1227 is modified to Phosphothreonine. Phosphoserine is present on residues serine 1259, serine 1263, and serine 1273. N6-acetyllysine is present on lysine 1334. The region spanning 1576 to 1914 (PYVTKDLLQS…SVYSSVPLLN (339 aa)) is the CoA carboxyltransferase N-terminal domain. The carboxyltransferase stretch occupies residues 1576-2234 (PYVTKDLLQS…EDLVKKKIHN (659 aa)). CoA is bound by residues arginine 1823, lysine 2127, and arginine 2129. Residues 1918–2234 (PIDRVIEFVP…EDLVKKKIHN (317 aa)) form the CoA carboxyltransferase C-terminal domain. Threonine 2153 carries the post-translational modification Phosphothreonine.

In terms of assembly, monomer, homodimer, and homotetramer. Can form filamentous polymers. Interacts in its inactive phosphorylated form with the BRCT domains of BRCA1 which prevents ACACA dephosphorylation and inhibits lipid synthesis. Interacts with MID1IP1; interaction with MID1IP1 promotes oligomerization and increases its activity. The cofactor is Mg(2+). It depends on Mn(2+) as a cofactor. Biotin is required as a cofactor. In terms of processing, phosphorylation on Ser-1263 is required for interaction with BRCA1. Phosphorylation at Ser-80 by AMPK inactivates enzyme activity. Post-translationally, the biotin cofactor is covalently attached to the central biotinyl-binding domain and is required for the catalytic activity. In terms of tissue distribution, expressed at high levels in mammary gland.

The protein resides in the cytoplasm. The protein localises to the cytosol. The enzyme catalyses hydrogencarbonate + acetyl-CoA + ATP = malonyl-CoA + ADP + phosphate + H(+). It participates in lipid metabolism; malonyl-CoA biosynthesis; malonyl-CoA from acetyl-CoA: step 1/1. With respect to regulation, inhibited by phosphorylation. Citrate promotes oligomerization of the protein into filaments that correspond to the most active form of the carboxylase. Functionally, cytosolic enzyme that catalyzes the carboxylation of acetyl-CoA to malonyl-CoA, the first and rate-limiting step of de novo fatty acid biosynthesis. This is a 2 steps reaction starting with the ATP-dependent carboxylation of the biotin carried by the biotin carboxyl carrier (BCC) domain followed by the transfer of the carboxyl group from carboxylated biotin to acetyl-CoA. This is Acetyl-CoA carboxylase 1 from Ovis aries (Sheep).